Consider the following 183-residue polypeptide: MKTIEVDEELYRYIASHTQHIGESASDILRRMLKFTAGQPAAVNDTQPVSAPAPSKAAPSAGNESRPQDRVRAVRELMLSDEYAEQKRAVNRFMLILSTLYRLDTAAFAEATTSLQGRTRIYFAGDEHTLLQSGTHTKPKHVPGTPYWVITNTNTGRKRSMVEHIMLSMQFPSELAEKVCGTI.

Residues 43–70 (VNDTQPVSAPAPSKAAPSAGNESRPQDR) form a disordered region. Residues 50–61 (SAPAPSKAAPSA) are compositionally biased toward low complexity. 3 interaction with DNA regions span residues 89-90 (AV), 118-122 (RTRIY), and 152-158 (NTNTGRK).

This sequence belongs to the SeqA family. In terms of assembly, homodimer. Polymerizes to form helical filaments.

It is found in the cytoplasm. In terms of biological role, negative regulator of replication initiation, which contributes to regulation of DNA replication and ensures that replication initiation occurs exactly once per chromosome per cell cycle. Binds to pairs of hemimethylated GATC sequences in the oriC region, thus preventing assembly of replication proteins and re-initiation at newly replicated origins. Repression is relieved when the region becomes fully methylated. This Pantoea ananatis (strain AJ13355) protein is Negative modulator of initiation of replication.